The primary structure comprises 154 residues: Snaclec lebecin subunit beta (154 aa).

Residues 1–23 (MGRIIFVSFGLLVVFLSLSGTGA) form the signal peptide. Cystine bridges form between Cys25–Cys36, Cys53–Cys150, and Cys125–Cys142. In terms of domain architecture, C-type lectin spans 32 to 151 (DEEHCYYVFF…CGDDYPFVCK (120 aa)). Asn139 is a glycosylation site (N-linked (GlcNAc...) asparagine).

In terms of assembly, heterodimer with the alpha subunit (AC W5XDM0); disulfide-linked. In terms of tissue distribution, expressed by the venom gland.

It localises to the secreted. Functionally, inhibits human breast cancer cells (MDA-MB231) migration and proliferation, as well as their adhesion to fibrinogen and fibronectin. This inhibition may be due to the binding to receptors of the integrin family, probably alpha-v/beta-3 (ITGAV/ITGB3) (40% inhibition of cell adhesion) and alpha-5/beta-1 (ITGA5/ITGB1) (by comparison with lebectin). This chain is Snaclec lebecin subunit beta, found in Macrovipera lebetinus (Levantine viper).